Here is a 64-residue protein sequence, read N- to C-terminus: Photosystem II reaction center protein J (64 aa).

Residues 35–55 form a helical membrane-spanning segment; the sequence is LWLVATAGGIAVIFVLGIFFY.

This sequence belongs to the PsbJ family. As to quaternary structure, PSII is composed of 1 copy each of membrane proteins PsbA, PsbB, PsbC, PsbD, PsbE, PsbF, PsbH, PsbI, PsbJ, PsbK, PsbL, PsbM, PsbT, PsbX, PsbY, Psb30/Ycf12, peripheral proteins PsbO, CyanoQ (PsbQ), PsbU, PsbV and a large number of cofactors. It forms dimeric complexes.

It localises to the cellular thylakoid membrane. In terms of biological role, one of the components of the core complex of photosystem II (PSII). PSII is a light-driven water:plastoquinone oxidoreductase that uses light energy to abstract electrons from H(2)O, generating O(2) and a proton gradient subsequently used for ATP formation. It consists of a core antenna complex that captures photons, and an electron transfer chain that converts photonic excitation into a charge separation. This Prochlorococcus marinus (strain MIT 9515) protein is Photosystem II reaction center protein J.